Reading from the N-terminus, the 128-residue chain is UPF0325 protein KPN78578_01770 (128 aa).

The protein belongs to the UPF0325 family.

The protein is UPF0325 protein KPN78578_01770 of Klebsiella pneumoniae subsp. pneumoniae (strain ATCC 700721 / MGH 78578).